Reading from the N-terminus, the 183-residue chain is Threonylcarbamoyl-AMP synthase (183 aa).

The YrdC-like domain maps to Met-1 to Gly-183.

Belongs to the SUA5 family. TsaC subfamily.

Its subcellular location is the cytoplasm. It carries out the reaction L-threonine + hydrogencarbonate + ATP = L-threonylcarbamoyladenylate + diphosphate + H2O. Its function is as follows. Required for the formation of a threonylcarbamoyl group on adenosine at position 37 (t(6)A37) in tRNAs that read codons beginning with adenine. Catalyzes the conversion of L-threonine, HCO(3)(-)/CO(2) and ATP to give threonylcarbamoyl-AMP (TC-AMP) as the acyladenylate intermediate, with the release of diphosphate. The protein is Threonylcarbamoyl-AMP synthase of Actinobacillus succinogenes (strain ATCC 55618 / DSM 22257 / CCUG 43843 / 130Z).